A 388-amino-acid chain; its full sequence is Probable mannan endo-1,4-beta-mannosidase A-1 (388 aa).

The first 20 residues, 1 to 20 (MKLSPLMALAGLASAQLALA), serve as a signal peptide directing secretion. Substrate-binding residues include Trp-93 and Asn-206. Glu-207 acts as the Proton donor in catalysis. A glycan (N-linked (GlcNAc...) asparagine) is linked at Asn-264. A substrate-binding site is contributed by Tyr-282. Residue Glu-315 is the Nucleophile of the active site. Asn-335 carries N-linked (GlcNAc...) asparagine glycosylation. Trp-345 is a binding site for substrate.

The protein belongs to the glycosyl hydrolase 5 (cellulase A) family.

It is found in the secreted. It carries out the reaction Random hydrolysis of (1-&gt;4)-beta-D-mannosidic linkages in mannans, galactomannans and glucomannans.. Its function is as follows. Endo-1,4-mannanase, a crucial enzyme for depolymerization of seed galactomannans and wood galactoglucomannans. The chain is Probable mannan endo-1,4-beta-mannosidase A-1 (manA-1) from Aspergillus terreus (strain NIH 2624 / FGSC A1156).